The chain runs to 59 residues: Large ribosomal subunit protein uL30 (59 aa).

The protein belongs to the universal ribosomal protein uL30 family. In terms of assembly, part of the 50S ribosomal subunit.

This is Large ribosomal subunit protein uL30 from Staphylococcus epidermidis (strain ATCC 12228 / FDA PCI 1200).